The chain runs to 121 residues: UPF0102 protein BF0706 (121 aa).

This sequence belongs to the UPF0102 family.

This is UPF0102 protein BF0706 from Bacteroides fragilis (strain YCH46).